We begin with the raw amino-acid sequence, 401 residues long: MKLFTSTLTAKKSSTHKPLISLALSVLISTLLISETAQAADANDRLEQEVDKQAKQLMAQYQIPGMAFGIIVDGKSHFYNYGLADKQRNQPVSEDTIFELGSVSKTFAATLASYSELNGTLSLDDTADKYIPYLKNSAIGNTKLISLVTYSAGGYHYRCLKTLENNKELLQYYKSWHPDFPVNSKRLYSNASIGLFGYISALSMHSDYTKLIENTVLPSLKMTNTFVDVPANKMEDYAFGYNAAGEPIRVNPGMLDAEAYGIKSTSADMTRFMAANMGLVTVDSQMQQALDNNRKGYYRTKSFTQGLAWEMYPLPTTLQQLVEGNSTETILQPQPIQLNEPPTPVLNDVWVNKTGATNGFGAYIAYMPAKKTGMFILANKNYPNTERVKAAYTILDSVMNN.

Positions 1–39 (MKLFTSTLTAKKSSTHKPLISLALSVLISTLLISETAQA) are cleaved as a signal peptide. Catalysis depends on Ser102, which acts as the Acyl-ester intermediate. Residue Tyr188 is the Proton acceptor of the active site. 353–355 (KTG) serves as a coordination point for substrate.

This sequence belongs to the class-C beta-lactamase family.

Its subcellular location is the secreted. The enzyme catalyses a beta-lactam + H2O = a substituted beta-amino acid. This protein is a serine beta-lactamase with a substrate specificity for cephalosporins. The chain is Beta-lactamase (ampC) from Psychrobacter immobilis.